A 414-amino-acid polypeptide reads, in one-letter code: Phosphoglycerate kinase (414 aa).

Substrate-binding positions include 19-21 (DLN), R34, 57-60 (HQSK), R114, and R154. ATP is bound by residues E332 and 358–361 (GGHS).

This sequence belongs to the phosphoglycerate kinase family. Monomer.

It is found in the cytoplasm. It carries out the reaction (2R)-3-phosphoglycerate + ATP = (2R)-3-phospho-glyceroyl phosphate + ADP. It participates in carbohydrate degradation; glycolysis; pyruvate from D-glyceraldehyde 3-phosphate: step 2/5. The protein is Phosphoglycerate kinase of Thermococcus onnurineus (strain NA1).